We begin with the raw amino-acid sequence, 599 residues long: MSDLSHIRNFSIIAHIDHGKSTLADRFIQHCGGLSDREMAEQVLDSMELERERGITIKAQSVTLNYQARDGKTYQLNFIDTPGHVDFSYEVSRSLAACEGALLVVDAAQGVEAQSVANCYTAIEQGLEVIPVLNKMDLPQAEPDKVAQEVEDIIGIDATEAVRCSAKSGLGIEDVLEALVNGIPAPVGDIDAPLQALIIDSWFDNYLGVVSLVRVTQGTLKTKDKIISKSIGKAHVVDMVGVFTPKRHVTGVLRAGEVGFVVAGIKEILGAPVGDTITHSNTADVKALPGFQKVKPQVYAGLFPVSSDDYESFREALAKLTLNDASLFYEPESSDALGFGFRCGFLGMLHMEIIQERLEREYDLDLITTAPTVVYEVVTSDGTTIYVDNPSKLPDVGFIDEMREPICEANILVPSDYLGAVITLCVEKRGIQKNLQYVGSQVSVSYELPMNEVVMDFFDRLKSVSRGFASLDYNFVRFEAAKLVRLDVLINSEKVDALALIVHRDNAPYKGRALADKMKELIPRQMFDVAIQAAIGGQIVARTTVKALRKNVTAKCYGGDVTRKKKLLEKQKAGKKRMKQVGRVEIPQEAFLAVLKVDS.

The tr-type G domain maps to 5–187; that stretch reads SHIRNFSIIA…ALVNGIPAPV (183 aa). GTP contacts are provided by residues 17–22 and 134–137; these read DHGKST and NKMD.

Belongs to the TRAFAC class translation factor GTPase superfamily. Classic translation factor GTPase family. LepA subfamily.

It is found in the cell inner membrane. The catalysed reaction is GTP + H2O = GDP + phosphate + H(+). Its function is as follows. Required for accurate and efficient protein synthesis under certain stress conditions. May act as a fidelity factor of the translation reaction, by catalyzing a one-codon backward translocation of tRNAs on improperly translocated ribosomes. Back-translocation proceeds from a post-translocation (POST) complex to a pre-translocation (PRE) complex, thus giving elongation factor G a second chance to translocate the tRNAs correctly. Binds to ribosomes in a GTP-dependent manner. The chain is Elongation factor 4 from Teredinibacter turnerae (strain ATCC 39867 / T7901).